Consider the following 310-residue polypeptide: 3,5-dioxohexanoate:acetyl-CoA acetone transferase (310 aa).

His49, His51, and Glu258 together coordinate Zn(2+).

Belongs to the BKACE family. It depends on Zn(2+) as a cofactor.

It catalyses the reaction 3,5-dioxohexanoate + acetyl-CoA = acetoacetyl-CoA + acetoacetate. Catalyzes the condensation of 3,5-dioxohexanoate and acetyl-CoA, forming acetoacetate and acetoacetyl-CoA. May be involved in fatty acid biosynthesis rescue via triacetic acid lactone. This is 3,5-dioxohexanoate:acetyl-CoA acetone transferase from Paraburkholderia graminis (strain ATCC 700544 / DSM 17151 / LMG 18924 / NCIMB 13744 / C4D1M).